Reading from the N-terminus, the 240-residue chain is Uridylate kinase (240 aa).

An ATP-binding site is contributed by 12 to 15; the sequence is KLSG. UMP is bound at residue Gly54. ATP is bound by residues Gly55 and Arg59. UMP is bound by residues Asp74 and 135 to 142; that span reads TGNPFFTT. The ATP site is built by Thr162, Tyr168, and Asp171.

It belongs to the UMP kinase family. In terms of assembly, homohexamer.

The protein localises to the cytoplasm. It catalyses the reaction UMP + ATP = UDP + ADP. The protein operates within pyrimidine metabolism; CTP biosynthesis via de novo pathway; UDP from UMP (UMPK route): step 1/1. With respect to regulation, inhibited by UTP. In terms of biological role, catalyzes the reversible phosphorylation of UMP to UDP. The polypeptide is Uridylate kinase (Xanthomonas campestris pv. campestris (strain ATCC 33913 / DSM 3586 / NCPPB 528 / LMG 568 / P 25)).